The primary structure comprises 132 residues: MARVTVEDCIDKVDNRFELVLLAGHRARQISQGAQVTVDRDNDKNPVVALREIAEETLSPADLKEDLIHSLQKHVEVDEPEMANEFLSHSGEAETVFATTSEEESCSFDCMSEEDLLAGIEGLVIPEKSDDY.

Belongs to the RNA polymerase subunit omega family. The RNAP catalytic core consists of 2 alpha, 1 beta, 1 beta' and 1 omega subunit. When a sigma factor is associated with the core the holoenzyme is formed, which can initiate transcription.

It catalyses the reaction RNA(n) + a ribonucleoside 5'-triphosphate = RNA(n+1) + diphosphate. Its function is as follows. Promotes RNA polymerase assembly. Latches the N- and C-terminal regions of the beta' subunit thereby facilitating its interaction with the beta and alpha subunits. The protein is DNA-directed RNA polymerase subunit omega of Bartonella quintana (strain Toulouse) (Rochalimaea quintana).